Consider the following 141-residue polypeptide: Large ribosomal subunit protein uL11 (141 aa).

It belongs to the universal ribosomal protein uL11 family. Part of the ribosomal stalk of the 50S ribosomal subunit. Interacts with L10 and the large rRNA to form the base of the stalk. L10 forms an elongated spine to which L12 dimers bind in a sequential fashion forming a multimeric L10(L12)X complex. Post-translationally, one or more lysine residues are methylated.

In terms of biological role, forms part of the ribosomal stalk which helps the ribosome interact with GTP-bound translation factors. This chain is Large ribosomal subunit protein uL11, found in Aster yellows witches'-broom phytoplasma (strain AYWB).